A 448-amino-acid polypeptide reads, in one-letter code: Chaperone SurA (448 aa).

Residues 1–27 form the signal peptide; that stretch reads MKKTLRFAAVASGLVASLITVAPSASA. PpiC domains lie at 185–288 and 301–399; these read QQDL…RLVE and IVQT…QVLG.

The protein resides in the periplasm. It carries out the reaction [protein]-peptidylproline (omega=180) = [protein]-peptidylproline (omega=0). Functionally, chaperone involved in the correct folding and assembly of outer membrane proteins. Recognizes specific patterns of aromatic residues and the orientation of their side chains, which are found more frequently in integral outer membrane proteins. May act in both early periplasmic and late outer membrane-associated steps of protein maturation. The sequence is that of Chaperone SurA from Burkholderia mallei (strain ATCC 23344).